The primary structure comprises 509 residues: Probable DNA ligase (509 aa).

Residue D218 participates in ATP binding. K220 (N6-AMP-lysine intermediate) is an active-site residue. Positions 225, 240, 269, 302, 374, and 380 each coordinate ATP.

The protein belongs to the ATP-dependent DNA ligase family. Requires Mg(2+) as cofactor.

The catalysed reaction is ATP + (deoxyribonucleotide)n-3'-hydroxyl + 5'-phospho-(deoxyribonucleotide)m = (deoxyribonucleotide)n+m + AMP + diphosphate.. DNA ligase that seals nicks in double-stranded DNA during DNA replication, DNA recombination and DNA repair. The protein is Probable DNA ligase of Nocardioides sp. (strain ATCC BAA-499 / JS614).